A 604-amino-acid polypeptide reads, in one-letter code: Putative ankyrin repeat protein L56 (604 aa).

13 ANK repeats span residues 77–106 (IDRY…DILV), 135–164 (FFKS…NADG), 166–189 (LSAC…YDDN), 190–219 (TIYH…EDKR), 221–247 (NVFI…KWKI), 248–277 (DVEF…DSKY), 314–341 (KFSK…NENV), 342–371 (DLRE…EFTD), 380–410 (EHIT…SRSY), 445–474 (YSQA…DIKP), 475–504 (ITNI…DITI), 505–534 (NDNR…DIRT), and 535–565 (DDDY…EPSN).

This is Putative ankyrin repeat protein L56 from Acanthamoeba polyphaga (Amoeba).